The sequence spans 556 residues: Formate--tetrahydrofolate ligase (556 aa).

Residue 65–72 (TPAGEGKS) coordinates ATP.

It belongs to the formate--tetrahydrofolate ligase family.

It catalyses the reaction (6S)-5,6,7,8-tetrahydrofolate + formate + ATP = (6R)-10-formyltetrahydrofolate + ADP + phosphate. It functions in the pathway one-carbon metabolism; tetrahydrofolate interconversion. The sequence is that of Formate--tetrahydrofolate ligase from Streptococcus mutans serotype c (strain ATCC 700610 / UA159).